Reading from the N-terminus, the 76-residue chain is Kappa-actitoxin-Avd4l (76 aa).

Positions Met1–Ala19 are cleaved as a signal peptide. Residues Ala20–Phe31 constitute a propeptide that is removed on maturation. 3 disulfide bridges follow: Cys37–Cys72, Cys39–Cys65, and Cys55–Cys73.

This sequence belongs to the sea anemone type 3 (BDS) potassium channel toxin family. As to expression, weakly expressed in the ectodermal tissue from the distal and proximal tentacles, body wall, and oral disk.

It localises to the secreted. It is found in the nematocyst. Functionally, blocks Kv3 voltage-gated potassium channels. Reduces blood pressure. In Anemonia viridis (Snakelocks anemone), this protein is Kappa-actitoxin-Avd4l.